The sequence spans 312 residues: Malate dehydrogenase (312 aa).

Residues 7 to 13 (GAAGGIG) and Asp-34 each bind NAD(+). Substrate is bound by residues Arg-81 and Arg-87. NAD(+) is bound by residues Asn-94 and 117–119 (ITN). Substrate-binding residues include Asn-119 and Arg-153. His-177 serves as the catalytic Proton acceptor. Met-227 lines the NAD(+) pocket.

It belongs to the LDH/MDH superfamily. MDH type 1 family. In terms of assembly, homodimer.

It catalyses the reaction (S)-malate + NAD(+) = oxaloacetate + NADH + H(+). Its function is as follows. Catalyzes the reversible oxidation of malate to oxaloacetate. This Yersinia pseudotuberculosis serotype O:1b (strain IP 31758) protein is Malate dehydrogenase.